The sequence spans 51 residues: Sperm protamine P1 (51 aa).

It belongs to the protamine P1 family. Testis.

The protein resides in the nucleus. Its subcellular location is the chromosome. Functionally, protamines substitute for histones in the chromatin of sperm during the haploid phase of spermatogenesis. They compact sperm DNA into a highly condensed, stable and inactive complex. This chain is Sperm protamine P1 (PRM1), found in Macaca mulatta (Rhesus macaque).